A 273-amino-acid polypeptide reads, in one-letter code: MLLFTMGLLLAILQPSTGQFPRVCANTQSLLRKECCPPWEGDGSPCGERSNRGTCQRILLSQAPLGPQFPFSGVDDREDWPSVFYNRTCRCRGNFMGFNCGECKFGFSGQNCTERRLRTRRNIFQLTIREKDKFLAYLNLAKNIPSKDYVIATGTYAQMNNGSNPMFRNINVYDLFVWMHYYASRDTLLGGSNVWRDIDFAHEAPGFLPWHRAFLLLWEREIQKITGDENFTIPYWDWRDAEDCVICTDEYMGGQHPTNPNLLSPASFFSSWQ.

An N-terminal signal peptide occupies residues 1–18 (MLLFTMGLLLAILQPSTG). N-linked (GlcNAc...) asparagine glycans are attached at residues Asn86, Asn111, and Asn161. Residues His180, His202, and His211 each coordinate Cu cation. Asn230 is a glycosylation site (N-linked (GlcNAc...) asparagine).

The protein belongs to the tyrosinase family. It depends on Cu(2+) as a cofactor.

The protein localises to the melanosome membrane. It localises to the melanosome. The catalysed reaction is 2 L-dopa + O2 = 2 L-dopaquinone + 2 H2O. The enzyme catalyses L-tyrosine + O2 = L-dopaquinone + H2O. In terms of biological role, this is a copper-containing oxidase that functions in the formation of pigments such as melanins and other polyphenolic compounds. Catalyzes the initial and rate limiting step in the cascade of reactions leading to melanin production from tyrosine. In addition to hydroxylating tyrosine to DOPA (3,4-dihydroxyphenylalanine), also catalyzes the oxidation of DOPA to DOPA-quinone, and possibly the oxidation of DHI (5,6-dihydroxyindole) to indole-5,6 quinone. This chain is Tyrosinase (TYR), found in Coturnix japonica (Japanese quail).